A 125-amino-acid polypeptide reads, in one-letter code: Protein JAZ13 (125 aa).

An EAR motif is present at residues 6-10 (LDLHL). The disordered stretch occupies residues 99 to 125 (KKRSKSFTLTPNYTSSTSSSSSSLHNF). Low complexity predominate over residues 112–125 (TSSTSSSSSSLHNF).

In terms of assembly, monomer. Lack of homodimerization, and very weak or no interaction with AFPH2/NINJA and other JAZ proteins. Interacts (via EAR motif) with TPL. Interacts (via jas motif) with MYC2. In terms of processing, phosphorylated at multiple serine residues.

Its function is as follows. Non-TIFY functional repressor of jasmonate (JA)-mediated growth and defense responses. Intrinsically resistant to JA-induced turnover, probably due to the absence of the canonical degron that strongly interacts with COI1 in the presence of JA-Ile in the TIFY/JAZ proteins. The polypeptide is Protein JAZ13 (Arabidopsis thaliana (Mouse-ear cress)).